Here is a 189-residue protein sequence, read N- to C-terminus: Peptidyl-tRNA hydrolase (189 aa).

Tyr-15 provides a ligand contact to tRNA. The Proton acceptor role is filled by His-20. TRNA contacts are provided by Phe-66, Asn-68, and Asn-114.

This sequence belongs to the PTH family. In terms of assembly, monomer.

The protein resides in the cytoplasm. It carries out the reaction an N-acyl-L-alpha-aminoacyl-tRNA + H2O = an N-acyl-L-amino acid + a tRNA + H(+). Hydrolyzes ribosome-free peptidyl-tRNAs (with 1 or more amino acids incorporated), which drop off the ribosome during protein synthesis, or as a result of ribosome stalling. Functionally, catalyzes the release of premature peptidyl moieties from peptidyl-tRNA molecules trapped in stalled 50S ribosomal subunits, and thus maintains levels of free tRNAs and 50S ribosomes. This is Peptidyl-tRNA hydrolase from Streptococcus mutans serotype c (strain ATCC 700610 / UA159).